We begin with the raw amino-acid sequence, 353 residues long: Cyanuric acid amidohydrolase (353 aa).

Residues 1 to 90 are RU A; sequence MSSTALYTVP…NIFVRDERQY (90 aa). Substrate is bound by residues arginine 49 and 69 to 70; that span reads SG. Residues 96-231 are RU B; it reads GLVTAVGRTR…CHILVVAESD (136 aa). Residue lysine 145 is part of the active site. Substrate-binding positions include arginine 177 and 214-215; that span reads SS. Serine 214 functions as the Nucleophile in the catalytic mechanism. The RU C stretch occupies residues 237-353; it reads LRAAHTAMRD…TANATGEASR (117 aa). Glutamate 275 provides a ligand contact to Mg(2+). Residues arginine 302 and 321 to 322 contribute to the substrate site; that span reads SG. Mg(2+) contacts are provided by alanine 324, glutamine 327, glycine 328, proline 329, and glycine 332.

It belongs to the cyclic amide hydrolase (CyAH) family. As to quaternary structure, homotetramer.

The enzyme catalyses cyanurate + H2O = 1-carboxybiuret + H(+). Its pathway is xenobiotic degradation; atrazine degradation; biuret from cyanurate: step 1/1. Its activity is regulated as follows. Inhibited by barbituric acid. Its function is as follows. Responsible for the hydrolysis of cyanuric acid, an intermediate formed during catabolism of s-triazine based compounds in herbicides such as atrazine and polymers such as melamine. Catalyzes the hydrolytic opening of the s-triazine ring of cyanuric acid (2,4,6-trihydroxy-s-triazine) to yield carbon dioxide and carboxybiuret, which spontaneously decarboxylates to biuret. Required for growth on melamine or cyanuric acid as sole nitrogen source. This chain is Cyanuric acid amidohydrolase, found in Rhodococcus sp.